Here is an 832-residue protein sequence, read N- to C-terminus: Protein translocase subunit SecA (832 aa).

ATP contacts are provided by residues Gln-87, 105 to 109 (GEGKT), and Asp-512.

Belongs to the SecA family. Monomer and homodimer. Part of the essential Sec protein translocation apparatus which comprises SecA, SecYEG and auxiliary proteins SecDF-YajC and YidC.

It is found in the cell membrane. The protein resides in the cytoplasm. It catalyses the reaction ATP + H2O + cellular proteinSide 1 = ADP + phosphate + cellular proteinSide 2.. Its function is as follows. Part of the Sec protein translocase complex. Interacts with the SecYEG preprotein conducting channel. Has a central role in coupling the hydrolysis of ATP to the transfer of proteins into and across the cell membrane, serving as an ATP-driven molecular motor driving the stepwise translocation of polypeptide chains across the membrane. In Wigglesworthia glossinidia brevipalpis, this protein is Protein translocase subunit SecA.